The sequence spans 486 residues: Cardiolipin synthase A (486 aa).

Transmembrane regions (helical) follow at residues 3–23 (TFYT…IAGV) and 38–58 (MAWL…YLSF). PLD phosphodiesterase domains are found at residues 219–246 (MDLR…VDPR) and 399–426 (KDGL…DMRS). Catalysis depends on residues histidine 224, lysine 226, aspartate 231, histidine 404, lysine 406, and aspartate 411.

The protein belongs to the phospholipase D family. Cardiolipin synthase subfamily. ClsA sub-subfamily.

The protein resides in the cell inner membrane. The enzyme catalyses 2 a 1,2-diacyl-sn-glycero-3-phospho-(1'-sn-glycerol) = a cardiolipin + glycerol. Catalyzes the reversible phosphatidyl group transfer from one phosphatidylglycerol molecule to another to form cardiolipin (CL) (diphosphatidylglycerol) and glycerol. This Pectobacterium carotovorum subsp. carotovorum (strain PC1) protein is Cardiolipin synthase A.